Here is a 605-residue protein sequence, read N- to C-terminus: uncharacterized protein (605 aa).

2 disordered regions span residues 10-78 (RRGG…FPPA) and 216-248 (RAPD…VRNP). The span at 20–48 (AGGRPAAGGRPAAGGRPAAGSRAAAGAAG) shows a compositional bias: low complexity. A compositionally biased stretch (pro residues) spans 220-233 (CPSPRTPMVKPPFR).

This is an uncharacterized protein from Dryophytes versicolor (chameleon treefrog).